The chain runs to 500 residues: MAHIWLLPLIFLVCILLAVFNHKKHPKYRQFPCPPGFPIIGNLHQIGELPHQTLWKLSKKYGPVMHLMLGRVPTVVVSSSDTARQVLRVHDLHCCTRPSLSGPRELSYNYLDIAFSPYDDYWKEVRKLCVQELFSTKQVHSIQPIKDEEVKKMIDSIAESASQKNPVNLNNKCLELTVSVVCRTAFGVSFEGTVLNSDRFNKIVREALEMLGSFSAADFIPYVGWIIDVLTGLQGRRERSKRDLNAFFEQMFDLHKEGKKEGNEDFVDLLLRLEKEEAVLGNDKLTRNHIKAILLDVLLAGIDTSAITMTWAMTELARNPRVMKKVQSEIRTQMGNRSMISFEDMDQLEYLKMVIKETWRLHPTTPLLLPREAMSEFDINGYTIPVKTRLHVNVWAIGRDPDTWKDPEVFLPERFMDNNIDAKGQHFELLPFGGGRRICPAIYMGTTMVEFGLANLLYHFDWKLPEGVEVKDIDVEEAPGLTVNKKNELLLVPEMRRSCG.

The chain crosses the membrane as a helical span at residues 1–21 (MAHIWLLPLIFLVCILLAVFN). C439 is a binding site for heme.

Belongs to the cytochrome P450 family. The cofactor is heme.

Its subcellular location is the membrane. The polypeptide is Cytochrome P450 71B35 (CYP71B35) (Arabidopsis thaliana (Mouse-ear cress)).